A 283-amino-acid chain; its full sequence is Putative sugar uptake protein BA_0200/GBAA_0200/BAS0200 (283 aa).

The next 10 helical transmembrane spans lie at 4–21 (LLALLPAIAWGNILLVSV), 26–48 (GAYSQTVGMTIGALFFATIMYVF), 52–71 (ALTMTILIVGFISGLFWALG), 84–106 (VSTTVTISTGMQLVATSIFGVIA), 110–132 (WTTTTTIILGTIAILLIVVGVVF), 151–173 (LLTLIVSTFGYLVYVIIIRWYNI), 178–195 (AILPQAVGMFVGAVVLTS), 208–230 (ALSGLLWGTGNLFLLLSLPRVGV), 234–253 (FPLSQTGIVISTFGAIVFLG), and 260–279 (QLIFIALGSVLIIGGAVLLG).

It belongs to the GRP transporter (TC 2.A.7.5) family.

The protein localises to the cell membrane. The protein is Putative sugar uptake protein BA_0200/GBAA_0200/BAS0200 of Bacillus anthracis.